Consider the following 347-residue polypeptide: uncharacterized protein (347 aa).

Residues 1-21 (MRYRIFLLFFFALLPTSLVWA) form the signal peptide.

This is an uncharacterized protein from Escherichia coli (strain K12).